The sequence spans 366 residues: Anhydro-N-acetylmuramic acid kinase (366 aa).

An ATP-binding site is contributed by 10–17; that stretch reads GTSMDGID.

It belongs to the anhydro-N-acetylmuramic acid kinase family.

The catalysed reaction is 1,6-anhydro-N-acetyl-beta-muramate + ATP + H2O = N-acetyl-D-muramate 6-phosphate + ADP + H(+). It participates in amino-sugar metabolism; 1,6-anhydro-N-acetylmuramate degradation. The protein operates within cell wall biogenesis; peptidoglycan recycling. Catalyzes the specific phosphorylation of 1,6-anhydro-N-acetylmuramic acid (anhMurNAc) with the simultaneous cleavage of the 1,6-anhydro ring, generating MurNAc-6-P. Is required for the utilization of anhMurNAc either imported from the medium or derived from its own cell wall murein, and thus plays a role in cell wall recycling. The polypeptide is Anhydro-N-acetylmuramic acid kinase (Legionella pneumophila (strain Lens)).